The primary structure comprises 458 residues: Acyl-CoA-binding domain-containing protein 5 (458 aa).

The region spanning 8–97 (HQTRFEAAVS…MKKILETMPV (90 aa)) is the ACB domain. An acyl-CoA contacts are provided by residues 19–28 (IQSLPKNGSF), 39–43 (YSFYK), Lys-65, and Tyr-84. Disordered stretches follow at residues 119–248 (KHGR…REED) and 296–369 (TETS…GPNG). Residues 125–139 (GVTSELGSVLTSTPN) show a composition bias toward polar residues. The stretch at 154–188 (AESDEEQAATKEVREEDEEEESEHSEQEDKDVEQQ) forms a coiled coil. Basic and acidic residues-rich tracts occupy residues 177 to 195 (HSEQEDKDVEQQPGHEKPA), 303 to 313 (ELKDGGEDGKQ), and 322 to 338 (TWSEKSEHFGSRRERPS). A compositionally biased stretch (gly residues) spans 343–356 (GGDGSRSGQIGSGG). Residues 373-402 (EQIAVVLMRLQEDMQNVLQRLHSLEVQTAS) are a coiled coil. A helical transmembrane segment spans residues 430-450 (GTLALAVVWPFVVHWLMHVFL).

This sequence belongs to the ATG37 family.

The protein localises to the peroxisome membrane. Its function is as follows. Acyl-CoA binding protein which acts as the peroxisome receptor for pexophagy but is dispensable for aggrephagy and nonselective autophagy. Binds medium- and long-chain acyl-CoA esters. This is Acyl-CoA-binding domain-containing protein 5 (acbd5) from Xenopus tropicalis (Western clawed frog).